We begin with the raw amino-acid sequence, 480 residues long: UDP-N-acetylmuramate--L-alanine ligase (480 aa).

Gly-129–Thr-135 contacts ATP.

This sequence belongs to the MurCDEF family.

It is found in the cytoplasm. The catalysed reaction is UDP-N-acetyl-alpha-D-muramate + L-alanine + ATP = UDP-N-acetyl-alpha-D-muramoyl-L-alanine + ADP + phosphate + H(+). It participates in cell wall biogenesis; peptidoglycan biosynthesis. Its function is as follows. Cell wall formation. The polypeptide is UDP-N-acetylmuramate--L-alanine ligase (Syntrophus aciditrophicus (strain SB)).